We begin with the raw amino-acid sequence, 381 residues long: 1-deoxy-D-xylulose 5-phosphate reductoisomerase (381 aa).

7 residues coordinate NADPH: Thr-11, Gly-12, Ser-13, Ile-14, Lys-36, Asn-37, and Asn-121. Lys-122 contacts 1-deoxy-D-xylulose 5-phosphate. An NADPH-binding site is contributed by Glu-123. A Mn(2+)-binding site is contributed by Asp-147. 4 residues coordinate 1-deoxy-D-xylulose 5-phosphate: Ser-148, Glu-149, Ser-173, and His-196. Position 149 (Glu-149) interacts with Mn(2+). Gly-202 provides a ligand contact to NADPH. The 1-deoxy-D-xylulose 5-phosphate site is built by Ser-209, Asn-214, Lys-215, and Glu-218. Residue Glu-218 coordinates Mn(2+).

This sequence belongs to the DXR family. Requires Mg(2+) as cofactor. Mn(2+) is required as a cofactor.

It catalyses the reaction 2-C-methyl-D-erythritol 4-phosphate + NADP(+) = 1-deoxy-D-xylulose 5-phosphate + NADPH + H(+). Its pathway is isoprenoid biosynthesis; isopentenyl diphosphate biosynthesis via DXP pathway; isopentenyl diphosphate from 1-deoxy-D-xylulose 5-phosphate: step 1/6. Catalyzes the NADPH-dependent rearrangement and reduction of 1-deoxy-D-xylulose-5-phosphate (DXP) to 2-C-methyl-D-erythritol 4-phosphate (MEP). In Acetivibrio thermocellus (strain ATCC 27405 / DSM 1237 / JCM 9322 / NBRC 103400 / NCIMB 10682 / NRRL B-4536 / VPI 7372) (Clostridium thermocellum), this protein is 1-deoxy-D-xylulose 5-phosphate reductoisomerase.